The following is a 673-amino-acid chain: UvrABC system protein B (673 aa).

In terms of domain architecture, Helicase ATP-binding spans 25–413 (EGIESGLAHQ…GSDIAEQVVR (389 aa)). Residue 38–45 (GVTGSGKT) coordinates ATP. A Beta-hairpin motif is present at residues 91–114 (YYDYYQPEAYVPTTDTFIEKDASV). Positions 430-583 (QVDDLLSEIN…QHQYNLDNNI (154 aa)) constitute a Helicase C-terminal domain. A UVR domain is found at 634-669 (DTKIVELEKLMQGHAQNLEFEQAAAMRDKIAKLRIQ).

The protein belongs to the UvrB family. Forms a heterotetramer with UvrA during the search for lesions. Interacts with UvrC in an incision complex.

The protein localises to the cytoplasm. The UvrABC repair system catalyzes the recognition and processing of DNA lesions. A damage recognition complex composed of 2 UvrA and 2 UvrB subunits scans DNA for abnormalities. Upon binding of the UvrA(2)B(2) complex to a putative damaged site, the DNA wraps around one UvrB monomer. DNA wrap is dependent on ATP binding by UvrB and probably causes local melting of the DNA helix, facilitating insertion of UvrB beta-hairpin between the DNA strands. Then UvrB probes one DNA strand for the presence of a lesion. If a lesion is found the UvrA subunits dissociate and the UvrB-DNA preincision complex is formed. This complex is subsequently bound by UvrC and the second UvrB is released. If no lesion is found, the DNA wraps around the other UvrB subunit that will check the other stand for damage. The chain is UvrABC system protein B from Colwellia psychrerythraea (strain 34H / ATCC BAA-681) (Vibrio psychroerythus).